The following is a 195-amino-acid chain: Early E3 22.2 kDa glycoprotein (195 aa).

N-linked (GlcNAc...) asparagine; by host glycosylation is found at Asn20, Asn61, Asn76, Asn88, Asn126, and Asn139.

The protein is Early E3 22.2 kDa glycoprotein of Canine adenovirus serotype 1 (strain Glaxo) (CAdV-1).